The following is a 771-amino-acid chain: DnaJ homolog subfamily C member 16 (771 aa).

The first 25 residues, 1–25 (MELKRLSISWQFLIVLVLILQSLSA), serve as a signal peptide directing secretion. Over 26–532 (LDFDPYRVLG…ESLLHSNWRE (507 aa)) the chain is Cytoplasmic. Residues 29-93 (DPYRVLGVSR…EKRTNYDHYG (65 aa)) form the J domain. In terms of domain architecture, Thioredoxin spans 116–244 (FYFDESFFHF…LRQFVESLLP (129 aa)). A helical; Anchor for type IV membrane protein membrane pass occupies residues 533–553 (MMPLLSLIFSALFILFGTVIV). At 554–771 (QAFSDSNEER…FYIPSWPELD (218 aa)) the chain is on the extracellular side. Residues 559 to 590 (SNEERESHPPDKEEVPEKAGKTEPSFTKESSS) are disordered. Over residues 560 to 579 (NEERESHPPDKEEVPEKAGK) the composition is skewed to basic and acidic residues. An N-linked (GlcNAc...) asparagine glycan is attached at Asn-628.

Its subcellular location is the endoplasmic reticulum membrane. Functionally, plays an important role in regulating the size of autophagosomes during the formation process. This Rattus norvegicus (Rat) protein is DnaJ homolog subfamily C member 16 (Dnajc16).